Consider the following 1257-residue polypeptide: Period circadian protein homolog 2 (1257 aa).

Positions 1 to 60 are disordered; the sequence is MNGYVDFSPSPTSPTKEPGAPQPTQAVLQEDVDMSSGSSGNENCSTGRDSQGSDCDDNGK. Polar residues predominate over residues 35–53; sequence SSGSSGNENCSTGRDSQGS. The Nuclear export signal 1 signature appears at 109–118; that stretch reads LIRTLKELKV. Residues 179 to 246 enclose the PAS 1 domain; sequence ITSEYIVKNA…FHSYTTPYKL (68 aa). Positions 306–310 match the LXXLL motif; that stretch reads LCCLL. The region spanning 319 to 385 is the PAS 2 domain; it reads YEAPRIPPEK…MLAIHKKILQ (67 aa). The PAC domain maps to 393–436; it reads YSPIRFRTRNGEYITLDTSWSSFINPWSRKISFIIGRHKVRVGP. Positions 460-469 match the Nuclear export signal 2 motif; it reads LTEQIHRLLM. 2 disordered regions span residues 471–565 and 617–638; these read PVPH…GASL and PSRK…PSKV. Positions 478–482 are important for protein stability; the sequence is SGYGS. A compositionally biased stretch (polar residues) spans 493 to 504; it reads MSQTSSSDSNGQ. The segment at 510 to 709 is CSNK1E binding domain; the sequence is RRSGIFKTSG…GAAGGLSQEK (200 aa). S525, S528, S531, S538, and S544 each carry phosphoserine. The residue at position 554 (T554) is a Phosphothreonine. A phosphoserine mark is found at S659, S693, S697, S706, S758, and S763. The tract at residues 757–832 is disordered; it reads RSRAQASDRG…SDTSQSSCPS (76 aa). The Nuclear localization signal signature appears at 778–794; the sequence is KKTGKNRKLKSKRVKTR. Over residues 779-792 the composition is skewed to basic residues; it reads KTGKNRKLKSKRVK. A compositionally biased stretch (low complexity) spans 821-832; that stretch reads SPSDTSQSSCPS. Position 858 is a phosphothreonine (T858). Positions 882-1067 are interaction with PPARG; the sequence is EFAVQPLPFA…DLCSATGSAL (186 aa). S939 bears the Phosphoserine mark. The residue at position 964 (T964) is a Phosphothreonine. The residue at position 971 (S971) is a Phosphoserine. A Nuclear export signal 3 motif is present at residues 983 to 990; sequence LQLNLLQL. A disordered region spans residues 994-1044; it reads PEGSTGAAGTLGTTGTAASGLDCTSGTSRDRQPKAPPTCNEPSDTQNSDAI. The span at 996-1014 shows a compositional bias: low complexity; sequence GSTGAAGTLGTTGTAASGL. A compositionally biased stretch (polar residues) spans 1033–1044; that stretch reads NEPSDTQNSDAI. Positions 1051-1055 match the LXXLL motif; the sequence is LNLLL. Over residues 1070 to 1092 the composition is skewed to low complexity; the sequence is SGASATSDSLGSSSLGFGTSQSG. Positions 1070-1115 are disordered; it reads SGASATSDSLGSSSLGFGTSQSGAGSSDTSHTSKYFGSIDSSENNH. A compositionally biased stretch (polar residues) spans 1093–1111; the sequence is AGSSDTSHTSKYFGSIDSS. S1126 is modified (phosphoserine). The CRY binding domain stretch occupies residues 1157-1257; that stretch reads SRDLQAVLKE…LTGPRIEAQT (101 aa). The tract at residues 1224 to 1257 is disordered; sequence PYEEDSPSPGLCDTSEAKEEEGEQLTGPRIEAQT.

Homodimer. Component of the circadian core oscillator, which includes the CRY proteins, CLOCK or NPAS2, BMAL1 or BMAL2, CSNK1D and/or CSNK1E, TIMELESS, and the PER proteins. Interacts with CLOCK-BMAL1 (off DNA). Interacts with BMAL2. Interacts directly with PER1 and PER3, and through a C-terminal domain, with CRY1 and CRY2. Interacts (via PAS 2 domain) with TIMELESS. Interacts with NFIL3. Different large complexes have been identified with different repressive functions. The core of PER complexes is composed of at least PER1, PER2, PER3, CRY1, CRY2, CSNK1D and/or CSNK1E. The large PER complex involved in the repression of transcriptional termination is composed of at least PER2, CDK9, DDX5, DHX9, NCBP1 and POLR2A (active). The large PER complex involved in the histone deacetylation is composed of at least HDAC1, PER2, SFPQ and SIN3A. The large PER complex involved in the histone methylation is composed of at least PER2, CBX3, TRIM28, SUV39H1 and/or SUV39H2; CBX3 mediates the formation of the complex. Interacts with SETX; the interaction inhibits termination of circadian target genes. Interacts with the nuclear receptors HNF4A, NR1D1, NR4A2, RORA, PPARA, PPARG and THRA; the interaction with at least PPARG is ligand dependent. Interacts with PML. Interacts (phosphorylated) with BTRC and FBXW11; the interactions trigger proteasomal degradation. Interacts with NONO and SFPQ. Interacts with CAVIN3. Interacts with MAGEL2. Interacts with MAP1LC3B. Interacts with HNF4A. Acetylated. Deacetylated by SIRT1, resulting in decreased protein stability. Deacetylated by SIRT6, preventing its degradation by the proteasome, resulting in increased protein stability. In terms of processing, phosphorylated by CSNK1E and CSNK1D. Phosphorylation results in PER2 protein degradation. May be dephosphorylated by PP1. Post-translationally, ubiquitinated, leading to its proteasomal degradation. Ubiquitination may be inhibited by CRY1. In terms of tissue distribution, in the brain, high expression in SCN during the subjective day. Constitutive expression in the cornu ammonis and in the dentate gyrus of the hippocampus. Also expressed in the piriform cortex and the glomeruli of the olfactory bulb, and at a lower extent in the cerebral cortex. Not expressed in the pars tuberalis and the Purkinje neurons. Also expressed in adipose tissue (white and brown), heart, kidney, bladder, lumbar spinal cord, skeletal muscle, spleen, lung, pancreas and liver with highest levels in skeletal muscle and liver and lowest levels in spleen.

The protein resides in the nucleus. It is found in the cytoplasm. The protein localises to the perinuclear region. Transcriptional repressor which forms a core component of the circadian clock. The circadian clock, an internal time-keeping system, regulates various physiological processes through the generation of approximately 24 hour circadian rhythms in gene expression, which are translated into rhythms in metabolism and behavior. It is derived from the Latin roots 'circa' (about) and 'diem' (day) and acts as an important regulator of a wide array of physiological functions including metabolism, sleep, body temperature, blood pressure, endocrine, immune, cardiovascular, and renal function. Consists of two major components: the central clock, residing in the suprachiasmatic nucleus (SCN) of the brain, and the peripheral clocks that are present in nearly every tissue and organ system. Both the central and peripheral clocks can be reset by environmental cues, also known as Zeitgebers (German for 'timegivers'). The predominant Zeitgeber for the central clock is light, which is sensed by retina and signals directly to the SCN. The central clock entrains the peripheral clocks through neuronal and hormonal signals, body temperature and feeding-related cues, aligning all clocks with the external light/dark cycle. Circadian rhythms allow an organism to achieve temporal homeostasis with its environment at the molecular level by regulating gene expression to create a peak of protein expression once every 24 hours to control when a particular physiological process is most active with respect to the solar day. Transcription and translation of core clock components (CLOCK, NPAS2, BMAL1, BMAL2, PER1, PER2, PER3, CRY1 and CRY2) plays a critical role in rhythm generation, whereas delays imposed by post-translational modifications (PTMs) are important for determining the period (tau) of the rhythms (tau refers to the period of a rhythm and is the length, in time, of one complete cycle). A diurnal rhythm is synchronized with the day/night cycle, while the ultradian and infradian rhythms have a period shorter and longer than 24 hours, respectively. Disruptions in the circadian rhythms contribute to the pathology of cardiovascular diseases, cancer, metabolic syndrome and aging. A transcription/translation feedback loop (TTFL) forms the core of the molecular circadian clock mechanism. Transcription factors, CLOCK or NPAS2 and BMAL1 or BMAL2, form the positive limb of the feedback loop, act in the form of a heterodimer and activate the transcription of core clock genes and clock-controlled genes (involved in key metabolic processes), harboring E-box elements (5'-CACGTG-3') within their promoters. The core clock genes: PER1/2/3 and CRY1/2 which are transcriptional repressors form the negative limb of the feedback loop and interact with the CLOCK|NPAS2-BMAL1|BMAL2 heterodimer inhibiting its activity and thereby negatively regulating their own expression. This heterodimer also activates nuclear receptors NR1D1/2 and RORA/B/G, which form a second feedback loop and which activate and repress BMAL1 transcription, respectively. PER1 and PER2 proteins transport CRY1 and CRY2 into the nucleus with appropriate circadian timing, but also contribute directly to repression of clock-controlled target genes through interaction with several classes of RNA-binding proteins, helicases and others transcriptional repressors. PER appears to regulate circadian control of transcription by at least three different modes. First, interacts directly with the CLOCK-BMAL1 at the tail end of the nascent transcript peak to recruit complexes containing the SIN3-HDAC that remodel chromatin to repress transcription. Second, brings H3K9 methyltransferases such as SUV39H1 and SUV39H2 to the E-box elements of the circadian target genes, like PER2 itself or PER1. The recruitment of each repressive modifier to the DNA seems to be very precisely temporally orchestrated by the large PER complex, the deacetylases acting before than the methyltransferases. Additionally, large PER complexes are also recruited to the target genes 3' termination site through interactions with RNA-binding proteins and helicases that may play a role in transcription termination to regulate transcription independently of CLOCK-BMAL1 interactions. Recruitment of large PER complexes to the elongating polymerase at PER and CRY termination sites inhibited SETX action, impeding RNA polymerase II release and thereby repressing transcriptional reinitiation. May propagate clock information to metabolic pathways via the interaction with nuclear receptors. Coactivator of PPARA and corepressor of NR1D1, binds rhythmically at the promoter of nuclear receptors target genes like BMAL1 or G6PC1. Directly and specifically represses PPARG proadipogenic activity by blocking PPARG recruitment to target promoters and thereby transcriptional activation. Required for fatty acid and lipid metabolism, is involved as well in the regulation of circulating insulin levels. Plays an important role in the maintenance of cardiovascular functions through the regulation of NO and vasodilatatory prostaglandins production in aortas. Controls circadian glutamate uptake in synaptic vesicles through the regulation of VGLUT1 expression. May also be involved in the regulation of inflammatory processes. Represses the CLOCK-BMAL1 induced transcription of BHLHE40/DEC1 and ATF4. Negatively regulates the formation of the TIMELESS-CRY1 complex by competing with TIMELESS for binding to CRY1. The polypeptide is Period circadian protein homolog 2 (Per2) (Mus musculus (Mouse)).